The primary structure comprises 770 residues: ATP-dependent RNA helicase HCA4 (770 aa).

Positions 41–69 (KFFKDLPISDPTLKGLRESSFIKLTEIQA) match the Q motif motif. The Helicase ATP-binding domain maps to 72–246 (IPVSLQGHDV…RLSLTDYKTV (175 aa)). 85–92 (AKTGSGKT) contributes to the ATP binding site. Positions 194–197 (DEAD) match the DEAD box motif. A Helicase C-terminal domain is found at 278–437 (KLDILFSFIK…SIKPQLQSLL (160 aa)). Phosphoserine is present on residues Ser-692, Ser-710, Ser-714, and Ser-743. The disordered stretch occupies residues 705-724 (GTGNLSDDMSDGDMPDSEGH).

The protein belongs to the DEAD box helicase family. DDX10/DBP4 subfamily. In terms of assembly, interacts with the U3 and U14 snoRNAs. Associates with pre-ribosomal complexes.

The protein resides in the nucleus. It localises to the nucleolus. It carries out the reaction ATP + H2O = ADP + phosphate + H(+). Functionally, ATP-dependent RNA helicase required for ribosome biogenesis. Involved in the release of U14 snoRNA in pre-ribosomal complexes. Required for pre-rRNA cleavage at site A2. This Saccharomyces cerevisiae (strain ATCC 204508 / S288c) (Baker's yeast) protein is ATP-dependent RNA helicase HCA4 (HCA4).